The following is a 1448-amino-acid chain: Glutamate receptor ionotropic, NMDA 2B (1448 aa).

The first 24 residues, 1–24, serve as a signal peptide directing secretion; it reads MRPTEACCYLKISLIILFYMGCYA. Residues 25-554 are Extracellular-facing; it reads QKHPNMDIAV…SAFLEPFSAD (530 aa). A disulfide bond links Cys-81 and Cys-316. His-122 and Glu-279 together coordinate Zn(2+). A glycan (N-linked (GlcNAc...) asparagine) is linked at Asn-336. 2 disulfide bridges follow: Cys-426–Cys-453 and Cys-433–Cys-454. 2 residues coordinate L-glutamate: Thr-511 and Arg-516. A helical membrane pass occupies residues 555–573; the sequence is VWVMMFVMLLIVSAVAVFV. Residues 574-600 are Cytoplasmic-facing; the sequence is FEYFSPVGYNRCLADGREPGGPSFTIG. Residues 601–620 constitute an intramembrane region (discontinuously helical); it reads KAIWLLWGLVFNNSVPVQNP. Residues 601 to 620 are pore-forming; the sequence is KAIWLLWGLVFNNSVPVQNP. At 621 to 627 the chain is on the cytoplasmic side; that stretch reads KGTTSKI. A helical transmembrane segment spans residues 628–643; sequence MVSVWAFFAVIFLASY. Topologically, residues 644-819 are extracellular; the sequence is TANLAAFMIQ…LDIDNMAGVF (176 aa). The N-linked (GlcNAc...) asparagine glycan is linked to Asn-685. L-glutamate is bound by residues 687-688 and Asp-729; that span reads ST. A disulfide bridge links Cys-743 with Cys-798. A helical membrane pass occupies residues 820–839; the sequence is YMLAAAMALSLITFIMEHLF. The Cytoplasmic portion of the chain corresponds to 840 to 1448; the sequence is FWQLRHCFMG…EKLSSIESDV (609 aa). The segment covering 1254 to 1265 has biased composition (polar residues); it reads APNSKYPQSPNG. Residues 1254–1277 are disordered; that stretch reads APNSKYPQSPNGKAQKRNRSKLHR. The segment covering 1267–1277 has biased composition (basic residues); that stretch reads AQKRNRSKLHR.

Belongs to the glutamate-gated ion channel (TC 1.A.10.1) family. NR2B/GRIN2B subfamily. Heterotetramer. Forms heterotetrameric channels composed of two GluN1/zeta subunits (GRIN1), and two identical GluN2/epsilon subunits (GRIN2A, GRIN2B, GRIN2C or GRIN2D) or GluN3 subunits (GRIN3A or GRIN3B) (in vitro). In vivo, the subunit composition may depend on the expression levels of the different subunits. As to expression, detected in oocytes.

The protein resides in the cell membrane. It is found in the postsynaptic cell membrane. The enzyme catalyses Ca(2+)(in) = Ca(2+)(out). The catalysed reaction is Na(+)(in) = Na(+)(out). It carries out the reaction K(+)(in) = K(+)(out). Its function is as follows. Component of N-methyl-D-aspartate (NMDA) receptors (NMDARs) that function as heterotetrameric, ligand-gated cation channels with high calcium permeability and voltage-dependent block by Mg(2+). Channel activation requires binding of the neurotransmitter L-glutamate to the GluN2 subunit, glycine binding to the GluN1 subunit, plus membrane depolarization to eliminate channel inhibition by Mg(2+). NMDARs mediate simultaneously the potasium efflux and the influx of calcium and sodium. Each GluN2 subunit confers differential attributes to channel properties, including activation, deactivation and desensitization kinetics, pH sensitivity, Ca2(+) permeability, and binding to allosteric modulators. In Xenopus laevis (African clawed frog), this protein is Glutamate receptor ionotropic, NMDA 2B.